The chain runs to 765 residues: MFRFQSLDDDCTLEEEEGLVEEEDEIDQFNDDTFGAGAIDDDWQEEHTRLAELDERVRDVLPGAGDSDTSHGGSNAHSSVLPPPSSSSRLYPDIDERGGGDLAESLTRLILGSDPAIAGVGSTSSDRSHLPPMLSAHPPHPSALAGPSSLLRSYQQHQQFLHRGPAPLSQINSHSIWENSMGFSPVSVNSGLIGQKEDKTLLSIIKEVGLPNRPPSLSRDEGRDLSERVPPPRSSSPVIGSPPVRAVPIGTPPKQPMSQILNQQNNHPSAIHVRASVPMRFPPPFPERLSPNNLLSIAKSPLSHSPFPAGVNPVLSQIQRAQLLNSQVGQFQRGPAPPLLQGGVGGFRPFFGQSGPRIGPHGPPLGHAPIRHNTTHLHPQHRRMLSQRMQNRGDHVGGRGVGERKNRDPYSNLMTQREKEWVAKIQMMQLQSTDPYLDDYYYQNYYEKMEKRQERDRDNRKEHTTKLITPQVAKLEHTYRPVQFAGSLGKLTVSSVNNPRKMIDAVVTSRSDDEEKREKQVWNKRRQILYTVEKMYSLLLEVQDFEKKFLQTPEHQRDVLLEQHKTHTLQLYNSLREKEWDDRVSDEQCLMIMSVRKGKRLISRLLPFLPQPQAAAVVMGIARNLPALAKKDKQDQVLCWLVEPVSVVIQSMSSTSLTDLLQELQGSEGQLPLVLQNKFGVTLLYLILSEGERMQSSDPNCQLMDDNRWTELVFSVTRELLKVPSSALSSPLFTPPNLVSLFSRYVDRQRLELLQEKLQITALSR.

Disordered regions lie at residues 1 to 98 (MFRF…DERG), 119 to 147 (GVGS…LAGP), and 210 to 244 (LPNR…SPPV). The segment covering 7–30 (LDDDCTLEEEEGLVEEEDEIDQFN) has biased composition (acidic residues). Positions 45-59 (EEHTRLAELDERVRD) are enriched in basic and acidic residues. Positions 218–227 (SRDEGRDLSE) are enriched in basic and acidic residues. 2 positions are modified to phosphoserine: S235 and S236. Residues 235–244 (SSPVIGSPPV) show a composition bias toward low complexity.

Belongs to the PAT1 family. As to quaternary structure, interacts with ribonucleoprotein complex components.

The protein resides in the cytoplasm. It localises to the P-body. Its subcellular location is the nucleus. The protein localises to the PML body. It is found in the nucleus speckle. Functionally, RNA-binding protein involved in deadenylation-dependent decapping of mRNAs, leading to the degradation of mRNAs. Acts as a scaffold protein that connects deadenylation and decapping machinery. Required for cytoplasmic mRNA processing body (P-body) assembly. The protein is Protein PAT1 homolog 1 (patl1) of Danio rerio (Zebrafish).